Reading from the N-terminus, the 320-residue chain is tRNA-cytidine(32) 2-sulfurtransferase (320 aa).

Positions 54–59 (SGGKDS) match the PP-loop motif motif. [4Fe-4S] cluster contacts are provided by C129, C132, and C220.

Belongs to the TtcA family. In terms of assembly, homodimer. It depends on Mg(2+) as a cofactor. Requires [4Fe-4S] cluster as cofactor.

It is found in the cytoplasm. It catalyses the reaction cytidine(32) in tRNA + S-sulfanyl-L-cysteinyl-[cysteine desulfurase] + AH2 + ATP = 2-thiocytidine(32) in tRNA + L-cysteinyl-[cysteine desulfurase] + A + AMP + diphosphate + H(+). It participates in tRNA modification. In terms of biological role, catalyzes the ATP-dependent 2-thiolation of cytidine in position 32 of tRNA, to form 2-thiocytidine (s(2)C32). The sulfur atoms are provided by the cysteine/cysteine desulfurase (IscS) system. This is tRNA-cytidine(32) 2-sulfurtransferase from Bordetella pertussis (strain Tohama I / ATCC BAA-589 / NCTC 13251).